The following is a 197-amino-acid chain: dITP/XTP pyrophosphatase (197 aa).

11–16 provides a ligand contact to substrate; it reads SHNAGK. Positions 42 and 71 each coordinate Mg(2+). Aspartate 71 (proton acceptor) is an active-site residue. Substrate contacts are provided by residues serine 72, 155–158, lysine 178, and 183–184; these read FGYD and HR.

This sequence belongs to the HAM1 NTPase family. As to quaternary structure, homodimer. The cofactor is Mg(2+).

The catalysed reaction is XTP + H2O = XMP + diphosphate + H(+). It catalyses the reaction dITP + H2O = dIMP + diphosphate + H(+). The enzyme catalyses ITP + H2O = IMP + diphosphate + H(+). Pyrophosphatase that catalyzes the hydrolysis of nucleoside triphosphates to their monophosphate derivatives, with a high preference for the non-canonical purine nucleotides XTP (xanthosine triphosphate), dITP (deoxyinosine triphosphate) and ITP. Seems to function as a house-cleaning enzyme that removes non-canonical purine nucleotides from the nucleotide pool, thus preventing their incorporation into DNA/RNA and avoiding chromosomal lesions. This chain is dITP/XTP pyrophosphatase, found in Pseudomonas aeruginosa (strain ATCC 15692 / DSM 22644 / CIP 104116 / JCM 14847 / LMG 12228 / 1C / PRS 101 / PAO1).